The primary structure comprises 508 residues: 2'-5'-oligoadenylate synthase-like protein 2 (508 aa).

Ser69 is a binding site for ATP. Asp81, Asp83, and Asp154 together coordinate Mg(2+). ATP-binding residues include Arg213 and Lys216. In terms of domain architecture, Ubiquitin-like spans 435–473 (ILVFVKYPGGQSKPFTIDPDDTILDLKEKIEDAGGPCAE).

The protein belongs to the 2-5A synthase family. Mg(2+) is required as a cofactor. In terms of tissue distribution, strongly expressed in spleen dendritic cells, whereas, in bone marrow-derived dendritic cells, the amount increases during the maturation process. Expressed in many organs, the highest levels being in thymus, lung, and bone marrow.

It carries out the reaction 3 ATP = 5'-triphosphoadenylyl-(2'-&gt;5')-adenylyl-(2'-&gt;5')-adenosine + 2 diphosphate. With respect to regulation, produced as a latent enzyme which is activated by dsRNA generated during the course of viral infection. The dsRNA activator must be at least 15 nucleotides long, and no modification of the 2'-hydroxyl group is tolerated. ssRNA or dsDNA do not act as activators. Its function is as follows. Interferon-induced, dsRNA-activated antiviral enzyme which plays a critical role in cellular innate antiviral response. Synthesizes oligomers of 2'-5'-oligoadenylates (2-5A) from ATP which then bind to the inactive monomeric form of ribonuclease L (RNase L) leading to its dimerization and subsequent activation. Activation of RNase L leads to degradation of cellular as well as viral RNA, resulting in the inhibition of protein synthesis, thus terminating viral replication. Can mediate the antiviral effect via the classical RNase L-dependent pathway or an alternative antiviral pathway independent of RNase L. The sequence is that of 2'-5'-oligoadenylate synthase-like protein 2 (Oasl2) from Mus musculus (Mouse).